A 546-amino-acid polypeptide reads, in one-letter code: Probable ganciclovir kinase (546 aa).

Positions 1–11 are enriched in polar residues; the sequence is MEQLKTPQNQK. Residues 1 to 29 are disordered; that stretch reads MEQLKTPQNQKTRPRNMLPKKKGKELKKR. Over residues 12-29 the composition is skewed to basic residues; sequence TRPRNMLPKKKGKELKKR. ATP contacts are provided by residues 185-193 and Lys-202; that span reads LGSGSYGMV. Residue Asp-297 is the Proton acceptor of the active site.

It belongs to the protein kinase superfamily. Tyr protein kinase family. HCMV ganciclovir subfamily.

Functionally, phosphorylates the antiviral nucleoside analog ganciclovir. The protein is Probable ganciclovir kinase (U69) of Human herpesvirus 7 (strain JI) (HHV-7).